Consider the following 371-residue polypeptide: Protein STRICTOSIDINE SYNTHASE-LIKE 7 (371 aa).

A signal peptide spans 1 to 25; sequence MPVLFSSRSLILSIIVPLLISIALY. Residues asparagine 101, asparagine 137, and asparagine 285 are each glycosylated (N-linked (GlcNAc...) asparagine). Phosphotyrosine is present on tyrosine 303.

It belongs to the strictosidine synthase family.

The protein localises to the vacuole. The sequence is that of Protein STRICTOSIDINE SYNTHASE-LIKE 7 from Arabidopsis thaliana (Mouse-ear cress).